The sequence spans 348 residues: Protein RecA (348 aa).

67–74 (GPESSGKT) provides a ligand contact to ATP.

Belongs to the RecA family.

The protein localises to the cytoplasm. Functionally, can catalyze the hydrolysis of ATP in the presence of single-stranded DNA, the ATP-dependent uptake of single-stranded DNA by duplex DNA, and the ATP-dependent hybridization of homologous single-stranded DNAs. It interacts with LexA causing its activation and leading to its autocatalytic cleavage. The polypeptide is Protein RecA (Salinispora arenicola (strain CNS-205)).